The sequence spans 131 residues: Photosystem II extrinsic protein U (131 aa).

An N-terminal signal peptide occupies residues 1-28; that stretch reads MKFISRLLVACSLLIGLMGFLGADLAQA. A propeptide spanning residues 29–36 is cleaved from the precursor; the sequence is LTPNPILA.

It belongs to the PsbU family. In terms of assembly, PSII is composed of 1 copy each of membrane proteins PsbA, PsbB, PsbC, PsbD, PsbE, PsbF, PsbH, PsbI, PsbJ, PsbK, PsbL, PsbM, PsbT, PsbX, PsbY, PsbZ, Psb30/Ycf12, peripheral proteins PsbO, CyanoQ (PsbQ), PsbU, PsbV and a large number of cofactors. It forms dimeric complexes.

The protein localises to the cellular thylakoid membrane. One of the extrinsic, lumenal subunits of photosystem II (PSII). PSII is a light-driven water plastoquinone oxidoreductase, using light energy to abstract electrons from H(2)O, generating a proton gradient subsequently used for ATP formation. The extrinsic proteins stabilize the structure of photosystem II oxygen-evolving complex (OEC), the ion environment of oxygen evolution and protect the OEC against heat-induced inactivation. May modulate the Cl(-) requirement for oxygen evolution. This chain is Photosystem II extrinsic protein U, found in Synechocystis sp. (strain ATCC 27184 / PCC 6803 / Kazusa).